A 1500-amino-acid chain; its full sequence is Carbamoyl-phosphate synthase [ammonia], mitochondrial (1500 aa).

A mitochondrion-targeting transit peptide spans methionine 1–leucine 38. The interval leucine 39–threonine 218 is anthranilate phosphoribosyltransferase homolog. Lysine 55, lysine 57, and lysine 119 each carry N6-acetyllysine; alternate. The residue at position 55 (lysine 55) is an N6-glutaryllysine; alternate. An N6-succinyllysine; alternate mark is found at lysine 55, lysine 57, and lysine 119. Serine 148 carries the phosphoserine modification. 2 positions are modified to N6-acetyllysine; alternate: lysine 157 and lysine 171. Lysine 157 is modified (N6-succinyllysine; alternate). Lysine 171 carries the post-translational modification N6-glutaryllysine; alternate. Lysine 176 bears the N6-glutaryllysine mark. Lysine 182 is subject to N6-acetyllysine. Serine 189 is subject to Phosphoserine. Lysine 197 is modified (N6-acetyllysine). An N6-acetyllysine; alternate mark is found at lysine 207, lysine 210, lysine 214, lysine 219, and lysine 228. Lysine 207, lysine 210, lysine 214, lysine 219, and lysine 228 each carry N6-glutaryllysine; alternate. Lysine 207 is subject to N6-succinyllysine; alternate. Lysine 214 is subject to N6-succinyllysine; alternate. The region spanning lysine 219–threonine 404 is the Glutamine amidotransferase type-1 domain. Lysine 237 carries the N6-glutaryllysine modification. Lysine 279 carries the post-translational modification N6-acetyllysine. An N6-acetyllysine; alternate mark is found at lysine 280, lysine 287, lysine 307, and lysine 310. Lysine 280 bears the N6-glutaryllysine; alternate mark. Lysine 287 and lysine 307 each carry N6-succinyllysine; alternate. N6-glutaryllysine; alternate occurs at positions 307 and 310. Lysine 400 is modified (N6-succinyllysine). Residues lysine 402, lysine 412, lysine 453, and lysine 458 each carry the N6-glutaryllysine; alternate modification. N6-succinyllysine; alternate occurs at positions 402 and 412. N6-acetyllysine; alternate occurs at positions 412, 453, 458, 522, 527, and 532. 3 positions are modified to N6-succinyllysine; alternate: lysine 458, lysine 522, and lysine 527. N6-glutaryllysine; alternate occurs at positions 527 and 532. Position 537 is a phosphoserine; alternate (serine 537). Serine 537 carries O-linked (GlcNAc) serine; alternate glycosylation. Serine 540 bears the Phosphoserine mark. The ATP-grasp 1 domain occupies serine 551–leucine 743. An N6-acetyllysine; alternate mark is found at lysine 553 and lysine 560. The residue at position 553 (lysine 553) is an N6-glutaryllysine; alternate. Residues lysine 553 and lysine 560 each carry the N6-succinyllysine; alternate modification. A Phosphoserine modification is found at serine 569. N6-acetyllysine; alternate is present on residues lysine 575, lysine 603, and lysine 612. N6-succinyllysine; alternate is present on residues lysine 575, lysine 603, and lysine 612. At lysine 630 the chain carries N6-acetyllysine. Position 728 is an N6-glutaryllysine (lysine 728). 8 positions are modified to N6-acetyllysine; alternate: lysine 751, lysine 757, lysine 772, lysine 793, lysine 811, lysine 831, lysine 841, and lysine 856. N6-succinyllysine; alternate occurs at positions 751 and 757. N6-glutaryllysine; alternate is present on residues lysine 757, lysine 772, lysine 793, and lysine 811. N6-succinyllysine; alternate is present on lysine 793. Position 831 is an N6-succinyllysine; alternate (lysine 831). An N6-glutaryllysine; alternate mark is found at lysine 841 and lysine 856. Lysine 869 carries the post-translational modification N6-glutaryllysine. Residues lysine 875, lysine 889, and lysine 892 each carry the N6-acetyllysine; alternate modification. 3 positions are modified to N6-glutaryllysine; alternate: lysine 875, lysine 889, and lysine 892. 3 positions are modified to N6-succinyllysine; alternate: lysine 875, lysine 889, and lysine 892. Phosphoserine is present on residues serine 896 and serine 898. 3 positions are modified to N6-acetyllysine; alternate: lysine 908, lysine 915, and lysine 919. Residues lysine 908, lysine 915, and lysine 919 each carry the N6-glutaryllysine; alternate modification. Residues lysine 915 and lysine 919 each carry the N6-succinyllysine; alternate modification. Lysine 935 carries the post-translational modification N6-acetyllysine. At serine 1036 the chain carries Phosphoserine. At lysine 1074 the chain carries N6-acetyllysine; alternate. At lysine 1074 the chain carries N6-glutaryllysine; alternate. The residue at position 1074 (lysine 1074) is an N6-succinyllysine; alternate. Residues serine 1079, serine 1090, and serine 1093 each carry the phosphoserine modification. An ATP-grasp 2 domain is found at serine 1093 to isoleucine 1284. Lysine 1100 carries the N6-acetyllysine; alternate modification. The residue at position 1100 (lysine 1100) is an N6-succinyllysine; alternate. Position 1149 is an N6-succinyllysine (lysine 1149). Residues lysine 1168 and lysine 1183 each carry the N6-acetyllysine; alternate modification. An N6-glutaryllysine; alternate mark is found at lysine 1168 and lysine 1183. Residues lysine 1168 and lysine 1183 each carry the N6-succinyllysine; alternate modification. Serine 1203 carries the phosphoserine modification. Lysine 1222 carries the N6-acetyllysine modification. Lysine 1224 bears the N6-glutaryllysine mark. Residues lysine 1232, lysine 1269, and lysine 1291 each carry the N6-acetyllysine; alternate modification. N6-succinyllysine; alternate is present on residues lysine 1232, lysine 1269, and lysine 1291. O-linked (GlcNAc) serine glycosylation occurs at serine 1331. O-linked (GlcNAc) threonine glycosylation is present at threonine 1332. The region spanning phenylalanine 1355 to alanine 1500 is the MGS-like domain. Lysine 1356 is subject to N6-acetyllysine; alternate. N6-glutaryllysine; alternate occurs at positions 1356 and 1360. N6-succinyllysine; alternate occurs at positions 1356 and 1360. 3 residues coordinate N-acetyl-L-glutamate: threonine 1391, threonine 1394, and tryptophan 1410. A phosphoserine mark is found at serine 1419 and serine 1431. N-acetyl-L-glutamate contacts are provided by asparagine 1437 and asparagine 1440. Lysine 1444 carries the N6-acetyllysine; alternate modification. Lysine 1444 is modified (N6-succinyllysine; alternate). Position 1449 (asparagine 1449) interacts with N-acetyl-L-glutamate. N6-acetyllysine; alternate is present on residues lysine 1471, lysine 1479, and lysine 1486. 3 positions are modified to N6-succinyllysine; alternate: lysine 1471, lysine 1479, and lysine 1486. Residues lysine 1479 and lysine 1486 each carry the N6-glutaryllysine; alternate modification.

In terms of assembly, can form homooligomers (monomers as predominant form and dimers). In terms of processing, 50% of the mature protein that was isolated had Leu-39 as its N-terminal residue and 50% had Ser-40 suggesting two adjacent processing sites. However, the possibility of proteolytic removal of Leu-39 during the isolation of the enzyme cannot be excluded. Undergoes proteolytic cleavage in the C-terminal region corresponding to the loss of approximately 12 AA residues from the C-terminus. Post-translationally, succinylated at Lys-287 and Lys-1291. Desuccinylated at Lys-1291 by SIRT5, leading to activation. Glutarylated. Glutarylation levels increase during fasting. Deglutarylated by SIRT5 at Lys-55, Lys-219, Lys-412, Lys-889, Lys-892, Lys-915, Lys-1360 and Lys-1486, leading to activation. Primarily in the liver and small intestine.

It localises to the mitochondrion. The protein localises to the nucleus. The protein resides in the nucleolus. Its subcellular location is the cell membrane. The enzyme catalyses hydrogencarbonate + NH4(+) + 2 ATP = carbamoyl phosphate + 2 ADP + phosphate + 2 H(+). Requires N-acetyl-L-glutamate (NAG) as an allosteric activator. N-acetyl-L-beta-phenylglutamate (Phe-NAG) can also activate CPSase I, but with an activation constant that is 2-fold higher than that for NAG. Functionally, involved in the urea cycle of ureotelic animals where the enzyme plays an important role in removing excess ammonia from the cell. The chain is Carbamoyl-phosphate synthase [ammonia], mitochondrial (Cps1) from Rattus norvegicus (Rat).